We begin with the raw amino-acid sequence, 1035 residues long: POM121-like protein 2 (1035 aa).

Disordered regions lie at residues 1–37 (MGSF…PLHQ), 177–213 (LFPE…PRPG), 286–343 (IKKE…LGYA), 415–508 (LGPL…QSTL), 754–791 (SPLG…QPAL), and 972–1035 (NTPV…AYKK). The span at 27-37 (TKRRPPQPLHQ) shows a compositional bias: basic residues. The span at 309–319 (GGSESSGQQNQ) shows a compositional bias: low complexity. 3 stretches are compositionally biased toward polar residues: residues 320–330 (KIPQLPSSPEN), 420–431 (SPQSTGEATSVA), and 445–462 (GCSQ…SKPT). Residues 464 to 481 (TFILLTPTSPTLPVTDTT) show a composition bias toward low complexity. The span at 493-502 (PMPPDPPAPP) shows a compositional bias: pro residues. A compositionally biased stretch (low complexity) spans 1000-1016 (RGPFRSSASSFSIGAKS). The span at 1017–1035 (KTPKNREKGHSRRHHAYKK) shows a compositional bias: basic residues.

Belongs to the POM121 family.

This Homo sapiens (Human) protein is POM121-like protein 2 (POM121L2).